The chain runs to 1489 residues: MQHARIFNSGGQSRRNHSGSSNVLSSQSLSKSNSMNSMSASQMSIQIGASRVTSSSSGNHFMNRNMRSTITVGKKHAPIEQQIHQTQTPNLTSTVQPNLKDPIPLTVWFHDLRTSDEDVIIDSNAIPGGVRNGQVYMLQSLETEDSKKLLFVINDRNIRDNNAAAQDDLQSSKFQISLISNPLQKLLDIPPRSLVQIKRIQNLAKVEADSVEIFIKDVNLSRDSMWNFSSTLVNSCVHIDKRLLFLNNRTGIVKYIYKNGRNVFSGYIGENTKVTFRSESAKLTVLVQLSREMWHFEENGEIMFHKLVNNLFPKMFKRWRDRNTHHAITIVLFTSMDLTDIPWTTLGQGERPNNRRDYFRVVVDQVNIFHWDKIMANLRLEFANFKRDIMLNQQDTNHYTMDGEPLPSVKGNILEAVNLGMTLANNRFINTDLKHSLNHYIVVTPGTGIYDVDYELMLETSKKMSTIDYGLDIICLSQPPLHVVPLFRFSKDGKVKHVVPNWCDISYYKDSNQSANSWIPRCKIYELQMMGVMENNMNQIRIDRFQVTQKAPTMIEAMDNYDNDLFKPVNHRKYIKENDEKAIDSYEIKEKNNSKFKPTTLKNANATLSLIFNNRTRLQPTELTPSNSSVLGTVTHSNGEALSTLYNLNKISDDRTISSLAPSISSTRSISSKRSMDILRKETHSPRLIKSDSLFKTETGASTPAEPRTTKSVERERKSRHLMKHYESENPTDIFWTEIENPSQEYRADTLLYPNVSRWSNAFPDKIRRRLVKWRSLQSPAALPITTSVFPSVKILETEYTFQIYNVLLNYENYLELETTHELMREMIQLRLLLGFQICFGDQVKKAESERKPAGNVESLIKYLPRHSSLGARIYMSLGDEIHRIYLDYNGNLNVQLYHKTVTNEENKITLGQAKLTNYFPLIRTRYADEYSTAKIDGINSKPKMYNWNQFDQYLAGYEDAMPDANKDFYKMKFVVMPAPIPKNAFYITNENLTDEEIRVEGLRKLIAMIEKGKYLKRKVTSKKEEILPEIVFYTGNLYDFLNEEAQNFDNTGNQAGLMIPESMRFNKSIKLSELAEELQTRSTGLPLVDRTWHFKRHLHCFLGSELVSWLLECFEDIQTRDEATSYGQSLMNKGLFKHVESRHGFLDGYYFYEFESEYIDKTYIESKKGWFGIKKTSSEKPDTDSNTPVYTRNNSDVESLSSPALPSQDPLDLKRITSTLITDSGASSLEGSRRRKKFILSRAVKYNVDSLGKSFRPEIVTVHYDRVHNPEHCYHIRLQWLSTTGRFIDEAITNWSRLCERHGLKLVETPWKELCNIPSISPFHSFVDIKLCVNPLVDPEFSDVKILRKNRFYYHLYFLKKFEFLLDNRSSLFFSKDSIEISYSWGKPSFQYAQYIHKNGTYIIELRDNGDFFLAPNNIHITRVNTTLTSIPDFDGSITTYNTNSQQVMLNFRSACQNEDYLKELFREAKSNWREEFPLDMMPTDLPQ.

2 disordered regions span residues 1-61 (MQHA…GNHF) and 694-718 (LFKTETGASTPAEPRTTKSVERERK). Over residues 18–46 (SGSSNVLSSQSLSKSNSMNSMSASQMSIQ) the composition is skewed to low complexity. The segment covering 51-61 (RVTSSSSGNHF) has biased composition (polar residues). A compositionally biased stretch (basic and acidic residues) spans 708–717 (RTTKSVERER). One can recognise a DEP domain in the interval 1082–1157 (RSTGLPLVDR…DGYYFYEFES (76 aa)). The tract at residues 1176–1209 (KTSSEKPDTDSNTPVYTRNNSDVESLSSPALPSQ) is disordered. Polar residues predominate over residues 1185–1206 (DSNTPVYTRNNSDVESLSSPAL).

This sequence belongs to the IML1 family.

It is found in the vacuole membrane. The sequence is that of Vacuolar membrane-associated protein IML1 (IML1) from Scheffersomyces stipitis (strain ATCC 58785 / CBS 6054 / NBRC 10063 / NRRL Y-11545) (Yeast).